Reading from the N-terminus, the 76-residue chain is DNA-directed RNA polymerase subunit epsilon (76 aa).

Belongs to the RNA polymerase subunit epsilon family. RNAP is composed of a core of 2 alpha, a beta and a beta' subunit. The core is associated with a delta subunit, and at least one of epsilon or omega. When a sigma factor is associated with the core the holoenzyme is formed, which can initiate transcription.

The catalysed reaction is RNA(n) + a ribonucleoside 5'-triphosphate = RNA(n+1) + diphosphate. Its function is as follows. A non-essential component of RNA polymerase (RNAP). This Streptococcus agalactiae serotype Ia (strain ATCC 27591 / A909 / CDC SS700) protein is DNA-directed RNA polymerase subunit epsilon.